We begin with the raw amino-acid sequence, 522 residues long: Solute carrier family 2, facilitated glucose transporter member 2 (522 aa).

At methionine 1 to leucine 10 the chain is on the cytoplasmic side. The chain crosses the membrane as a helical span at residues alanine 11–isoleucine 31. Over asparagine 32 to serine 96 the chain is Extracellular. The N-linked (GlcNAc...) asparagine glycan is linked to asparagine 62. Residues leucine 97 to glycine 117 traverse the membrane as a helical segment. The Cytoplasmic portion of the chain corresponds to aspartate 118–alanine 125. The helical transmembrane segment at methionine 126–glycine 146 threads the bilayer. Over proline 147–arginine 156 the chain is Extracellular. A helical transmembrane segment spans residues serine 157–isoleucine 177. Over alanine 178 to alanine 185 the chain is Cytoplasmic. Residues leucine 186–leucine 206 form a helical membrane-spanning segment. D-glucose is bound at residue glutamine 191. At serine 207–tyrosine 215 the chain is on the extracellular side. A helical transmembrane segment spans residues tryptophan 216–phenylalanine 236. The Cytoplasmic portion of the chain corresponds to cysteine 237 to proline 301. A helical transmembrane segment spans residues isoleucine 302 to tyrosine 322. D-glucose-binding positions include glutamine 312–glutamine 313 and asparagine 318. Over tyrosine 323–valine 337 the chain is Extracellular. Residues tyrosine 338–valine 358 traverse the membrane as a helical segment. Asparagine 347 contributes to the D-glucose binding site. The Cytoplasmic segment spans residues glutamate 359–threonine 365. The helical transmembrane segment at leucine 366–valine 386 threads the bilayer. Over leucine 387–alanine 401 the chain is Extracellular. A helical membrane pass occupies residues isoleucine 402–alanine 422. D-glucose is bound by residues glutamate 410 and tryptophan 418. The Cytoplasmic segment spans residues glutamate 423–proline 431. Residues threonine 432–phenylalanine 452 traverse the membrane as a helical segment. Residues glutamine 453–leucine 459 lie on the Extracellular side of the membrane. Residues glycine 460–phenylalanine 480 traverse the membrane as a helical segment. At lysine 481–valine 522 the chain is on the cytoplasmic side. Threonine 521 carries the post-translational modification Phosphothreonine.

This sequence belongs to the major facilitator superfamily. Sugar transporter (TC 2.A.1.1) family. Glucose transporter subfamily. N-glycosylated; required for stability and retention at the cell surface of pancreatic beta cells. As to expression, present in liver, intestine, kidney and beta-pancreatic islet cells.

Its subcellular location is the cell membrane. It carries out the reaction D-glucose(out) = D-glucose(in). It catalyses the reaction D-fructose(out) = D-fructose(in). The catalysed reaction is L-dehydroascorbate(out) = L-dehydroascorbate(in). The enzyme catalyses D-galactose(in) = D-galactose(out). D-glucose and maltose competitively inhibit fructose transport. D-glucose, D-fructose and maltose inhibit deoxyglucose transport. Functionally, facilitative hexose transporter that mediates the transport of glucose, fructose and galactose. Likely mediates the bidirectional transfer of glucose across the plasma membrane of hepatocytes and is responsible for uptake of glucose by the beta cells; may comprise part of the glucose-sensing mechanism of the beta cell. May also participate with the Na(+)/glucose cotransporter in the transcellular transport of glucose in the small intestine and kidney. Also able to mediate the transport of dehydroascorbate. The protein is Solute carrier family 2, facilitated glucose transporter member 2 of Rattus norvegicus (Rat).